Reading from the N-terminus, the 299-residue chain is F-actin-capping protein subunit alpha-3 (299 aa).

A phosphoserine mark is found at S2 and S290.

The protein belongs to the F-actin-capping protein alpha subunit family. In terms of assembly, component of the F-actin capping complex, composed of a heterodimer of an alpha and a beta subunit. Component of the WASH complex, composed of F-actin-capping protein subunit alpha (CAPZA1, CAPZA2 or CAPZA3), F-actin-capping protein subunit beta (CAPZB), WASHC1, WASHC2, WASHC3, WASHC4 and WASHC5. In terms of tissue distribution, exclusively expressed in the testis.

The protein localises to the cytoplasm. It localises to the cytoskeleton. Functionally, F-actin-capping proteins bind in a Ca(2+)-independent manner to the fast growing ends of actin filaments (barbed end) thereby blocking the exchange of subunits at these ends. Unlike other capping proteins (such as gelsolin and severin), these proteins do not sever actin filaments. May play a role in the morphogenesis of spermatid. The chain is F-actin-capping protein subunit alpha-3 (Capza3) from Rattus norvegicus (Rat).